Consider the following 207-residue polypeptide: 8-oxoguanine DNA glycosylase/AP lyase (207 aa).

Catalysis depends on residues Lys128 and Asp146.

Belongs to the type-2 OGG1 family.

It carries out the reaction 2'-deoxyribonucleotide-(2'-deoxyribose 5'-phosphate)-2'-deoxyribonucleotide-DNA = a 3'-end 2'-deoxyribonucleotide-(2,3-dehydro-2,3-deoxyribose 5'-phosphate)-DNA + a 5'-end 5'-phospho-2'-deoxyribonucleoside-DNA + H(+). Functionally, catalyzes the excision of an oxidatively damaged form of guanine (7,8-dihydro-8-oxoguanine = 8-oxoG) from DNA. Also cleaves the DNA backbone at apurinic/apyrimidinic sites (AP sites). This is 8-oxoguanine DNA glycosylase/AP lyase from Saccharolobus islandicus (strain L.S.2.15 / Lassen #1) (Sulfolobus islandicus).